The sequence spans 156 residues: SsrA-binding protein (156 aa).

Belongs to the SmpB family.

It is found in the cytoplasm. Required for rescue of stalled ribosomes mediated by trans-translation. Binds to transfer-messenger RNA (tmRNA), required for stable association of tmRNA with ribosomes. tmRNA and SmpB together mimic tRNA shape, replacing the anticodon stem-loop with SmpB. tmRNA is encoded by the ssrA gene; the 2 termini fold to resemble tRNA(Ala) and it encodes a 'tag peptide', a short internal open reading frame. During trans-translation Ala-aminoacylated tmRNA acts like a tRNA, entering the A-site of stalled ribosomes, displacing the stalled mRNA. The ribosome then switches to translate the ORF on the tmRNA; the nascent peptide is terminated with the 'tag peptide' encoded by the tmRNA and targeted for degradation. The ribosome is freed to recommence translation, which seems to be the essential function of trans-translation. The polypeptide is SsrA-binding protein (Staphylococcus carnosus (strain TM300)).